Consider the following 97-residue polypeptide: uncharacterized protein (97 aa).

3 helical membrane-spanning segments follow: residues 5–25, 49–71, and 75–92; these read INYL…FVGI, IAGY…SFQG, and LIPP…IYVN.

It is found in the cell membrane. This is an uncharacterized protein from Bacillus subtilis (strain 168).